The sequence spans 193 residues: Rho-related GTP-binding protein RhoA-B (193 aa).

Residues 12-19 (GDGACGKT), 30-37 (FPEVYVPT), 59-63 (DTAGQ), 117-120 (NKKD), and 160-162 (SAK) each bind GTP. Tyr-34 carries (Microbial infection) O-linked (GlcNAc) tyrosine; by Yersinia Afp18 glycosylation. Position 190 is a cysteine methyl ester (Cys-190). The S-geranylgeranyl cysteine moiety is linked to residue Cys-190. Positions 191–193 (CLL) are cleaved as a propeptide — removed in mature form.

The protein belongs to the small GTPase superfamily. Rho family. Post-translationally, (Microbial infection) Glycosylated at Tyr-34 by Yersinia ruckeri toxin Afp18. Mono-O-GlcNAcylation by Afp18 inhibits RhoA activation by guanine nucleotide exchange factors and blocks RhoA signaling.

It is found in the cell membrane. Functionally, regulates a signal transduction pathway linking plasma membrane receptors to the assembly of focal adhesions and actin stress fibers. This Danio rerio (Zebrafish) protein is Rho-related GTP-binding protein RhoA-B.